The primary structure comprises 361 residues: Polyribonucleotide 5'-hydroxyl-kinase PH0197 (361 aa).

An ATP-binding site is contributed by 43–50 (GDVDTGKT).

Requires a divalent metal cation as cofactor.

It catalyses the reaction a 5'-end dephospho-2'-deoxyribonucleoside-DNA + ATP = a 5'-end 5'-phospho-2'-deoxyribonucleoside-DNA + ADP + H(+). The catalysed reaction is a 5'-end dephospho-ribonucleoside-RNA + ATP = a 5'-end 5'-phospho-ribonucleoside-RNA + ADP + H(+). Its activity is regulated as follows. DNA kinase activity is inhibited by 250 mM sodium chloride whereas RNA kinase activity is unaffected. Its function is as follows. Polynucleotide kinase that can phosphorylate the 5'-hydroxyl groups of both single-stranded RNA (ssRNA) and single-stranded DNA (ssDNA). Exhibits a strong preference for ssRNA. The protein is Polyribonucleotide 5'-hydroxyl-kinase PH0197 of Pyrococcus horikoshii (strain ATCC 700860 / DSM 12428 / JCM 9974 / NBRC 100139 / OT-3).